A 104-amino-acid chain; its full sequence is Large ribosomal subunit protein uL24 (104 aa).

This sequence belongs to the universal ribosomal protein uL24 family. In terms of assembly, part of the 50S ribosomal subunit.

One of two assembly initiator proteins, it binds directly to the 5'-end of the 23S rRNA, where it nucleates assembly of the 50S subunit. Functionally, one of the proteins that surrounds the polypeptide exit tunnel on the outside of the subunit. The protein is Large ribosomal subunit protein uL24 of Saccharopolyspora erythraea (strain ATCC 11635 / DSM 40517 / JCM 4748 / NBRC 13426 / NCIMB 8594 / NRRL 2338).